The sequence spans 507 residues: Peroxisomal catalase (507 aa).

Catalysis depends on residues H65 and N138. Y348 is a binding site for heme. Positions 505–507 match the Microbody targeting signal motif; sequence SKI.

The protein belongs to the catalase family. As to quaternary structure, homotetramer. The cofactor is heme.

It localises to the peroxisome matrix. It catalyses the reaction 2 H2O2 = O2 + 2 H2O. Its function is as follows. Catalyzes the degradation of hydrogen peroxide (H(2)O(2)) generated by peroxisomal oxidases to water and oxygen, thereby protecting cells from the toxic effects of hydrogen peroxide. The polypeptide is Peroxisomal catalase (PXP9) (Pichia angusta (Yeast)).